An 81-amino-acid polypeptide reads, in one-letter code: Small ribosomal subunit protein bS16 (81 aa).

The protein belongs to the bacterial ribosomal protein bS16 family.

The protein is Small ribosomal subunit protein bS16 of Phytoplasma mali (strain AT).